The primary structure comprises 525 residues: Protein translocase subunit SecD (525 aa).

A run of 6 helical transmembrane segments spans residues 9–29, 368–388, 392–412, 415–435, 460–480, and 487–507; these read LYLVVLVALGSIYYALPSLLG, VLIGGVLVVLFMVLYYKGFGM, LAVVLNVTILVSLLALMQATL, PGIAGAVLLLGMAVDANVLIF, FSTILDANITTLITAVILYQF, and GFAVTLSVGLLASMFTAIFVT.

This sequence belongs to the SecD/SecF family. SecD subfamily. As to quaternary structure, forms a complex with SecF. Part of the essential Sec protein translocation apparatus which comprises SecA, SecYEG and auxiliary proteins SecDF-YajC and YidC.

Its subcellular location is the cell inner membrane. In terms of biological role, part of the Sec protein translocase complex. Interacts with the SecYEG preprotein conducting channel. SecDF uses the proton motive force (PMF) to complete protein translocation after the ATP-dependent function of SecA. This is Protein translocase subunit SecD from Magnetococcus marinus (strain ATCC BAA-1437 / JCM 17883 / MC-1).